Here is a 266-residue protein sequence, read N- to C-terminus: Phosphate import ATP-binding protein PstB (266 aa).

Positions Val-15 to Ile-261 constitute an ABC transporter domain. An ATP-binding site is contributed by Gly-50 to Ser-57.

The protein belongs to the ABC transporter superfamily. Phosphate importer (TC 3.A.1.7) family. The complex is composed of two ATP-binding proteins (PstB), two transmembrane proteins (PstC and PstA) and a solute-binding protein (PstS).

It localises to the cell inner membrane. It catalyses the reaction phosphate(out) + ATP + H2O = ADP + 2 phosphate(in) + H(+). Part of the ABC transporter complex PstSACB involved in phosphate import. Responsible for energy coupling to the transport system. The chain is Phosphate import ATP-binding protein PstB from Nitrosomonas europaea (strain ATCC 19718 / CIP 103999 / KCTC 2705 / NBRC 14298).